The following is a 411-amino-acid chain: GPI-anchor transamidase (411 aa).

Positions 1-22 (MRIAMHLPLLLLYIFLLPLSGA) are cleaved as a signal peptide. Over 23 to 376 (NNTDAAHEVI…DIDSNECFFT (354 aa)) the chain is Lumenal. Residues histidine 157 and cysteine 199 contribute to the active site. 2 N-linked (GlcNAc...) asparagine glycosylation sites follow: asparagine 256 and asparagine 346. Residues 377–397 (SFKQSATIILALIVTILWFML) traverse the membrane as a helical segment. The Cytoplasmic segment spans residues 398 to 411 (RGNTAKATYDLYTN).

This sequence belongs to the peptidase C13 family. In terms of assembly, forms a complex with CDC91, GPI16, GPI17 and GAA1. The disulfide bond between GPI8 and GPI16 is important for normal enzyme activity.

It is found in the endoplasmic reticulum membrane. It participates in glycolipid biosynthesis; glycosylphosphatidylinositol-anchor biosynthesis. In terms of biological role, mediates GPI anchoring in the endoplasmic reticulum, by replacing a protein's C-terminal GPI attachment signal peptide with a pre-assembled GPI. During this transamidation reaction, the GPI transamidase forms a carbonyl intermediate with the substrate protein. This Saccharomyces cerevisiae (strain ATCC 204508 / S288c) (Baker's yeast) protein is GPI-anchor transamidase (GPI8).